A 962-amino-acid chain; its full sequence is METLRIMSGKIVIKGAREHNLQNVDLELPRDKFIVITGISGSGKSSLAFDTIYAEGQRRYVESLSAYARQFLGQMKKPEMDYIEGLSPAISIDQKTTRVNPRSTVGTITEIYDYLRLLFARIGKPHCYLCGREIEQQTSTQIVDRIMDDGEGERIIILAPVVRDRKGEHQRVFERLREQGFVRVRVDGEIHDLEDEFDLDRNRKHSIDVVVDRLVVRRDTEFRKRLADSVETALQLGEGTVRVPSTMTPGEERIYSEHFACPGTAGINFEEISPRMFSFNSPHGACPECNGLGSKLEIDPDLVVPYPERSINEGAIVPWSKSGKRDNYYHQMLRAVAEHYGFSLDTPFRDLDEEHRRAILYGTDEKIQFVFQRKNRTYRVNRRFEGVIPRMERIYMETKSNYMRTYIGRFMSNHACPVCGGSRLRPESLSVTINGRSIHDVVEMSIREAHEFFDSLKLTEREEYIAREVLKEIRERLRFLIDVGLDYLTLSRSSGTLSGGEAQRIRLATQIGSGLVGVLYILDEPSIGLHQRDNRRLIETLKRLRDLGNTLIVVEHDEETILSADHVVDIGPGAGEHGGCVVAEGTPEEIMEDPDSLTGAYLSGRETIPLPEVRRRPSGRYLTVRGAAENNLREIDVRIPLGLFTCVTGVSGSGKSTLVNDILYRGVYERLNHKHMNAGRHTDIEGLQHIDKVVMIDQSPIGRTPRSNPATYTGVFTHIRELFAQTPEARKRGYRPGRFSFNVKGGRCEACGGDGIIKIEMHFLADVYVPCEVCRGRRYNEETLEIRYRGRNIAEVLDMTVEEALEFFENIPQVRRKLQTLYDVGLGYIKLGQPATTLSGGEAQRVKLAKELSRRSTGSTLYILDEPTTGLHFDDIKKLLNVLGRLVDAGNTAVVIEHNLDVIKSADHIIDLGPEGGERGGLVVAEGTPEEVAASGTHTGRFLREVLADERSQKVPVGQDTG.

Residue 38–45 (GISGSGKS) coordinates ATP. ABC transporter domains follow at residues 319-597 (WSKS…PDSL) and 617-944 (PSGR…RFLR). 649–656 (GVSGSGKS) is a binding site for ATP. The C4-type zinc finger occupies 748–774 (CEACGGDGIIKIEMHFLADVYVPCEVC).

Belongs to the ABC transporter superfamily. UvrA family. In terms of assembly, forms a heterotetramer with UvrB during the search for lesions.

Its subcellular location is the cytoplasm. The UvrABC repair system catalyzes the recognition and processing of DNA lesions. UvrA is an ATPase and a DNA-binding protein. A damage recognition complex composed of 2 UvrA and 2 UvrB subunits scans DNA for abnormalities. When the presence of a lesion has been verified by UvrB, the UvrA molecules dissociate. The sequence is that of UvrABC system protein A from Methanothermobacter thermautotrophicus (strain ATCC 29096 / DSM 1053 / JCM 10044 / NBRC 100330 / Delta H) (Methanobacterium thermoautotrophicum).